Reading from the N-terminus, the 36-residue chain is Esculentin-2R (36 aa).

Cys30 and Cys36 are disulfide-bonded.

As to expression, expressed by the skin glands.

It localises to the secreted. Antimicrobial peptide. The polypeptide is Esculentin-2R (Pelophylax ridibundus (Marsh frog)).